The sequence spans 251 residues: Ubiquinone/menaquinone biosynthesis C-methyltransferase UbiE (251 aa).

S-adenosyl-L-methionine-binding positions include threonine 74, aspartate 95, and 123–124 (NA).

This sequence belongs to the class I-like SAM-binding methyltransferase superfamily. MenG/UbiE family.

It carries out the reaction a 2-demethylmenaquinol + S-adenosyl-L-methionine = a menaquinol + S-adenosyl-L-homocysteine + H(+). The catalysed reaction is a 2-methoxy-6-(all-trans-polyprenyl)benzene-1,4-diol + S-adenosyl-L-methionine = a 5-methoxy-2-methyl-3-(all-trans-polyprenyl)benzene-1,4-diol + S-adenosyl-L-homocysteine + H(+). It participates in quinol/quinone metabolism; menaquinone biosynthesis; menaquinol from 1,4-dihydroxy-2-naphthoate: step 2/2. It functions in the pathway cofactor biosynthesis; ubiquinone biosynthesis. Its function is as follows. Methyltransferase required for the conversion of demethylmenaquinol (DMKH2) to menaquinol (MKH2) and the conversion of 2-polyprenyl-6-methoxy-1,4-benzoquinol (DDMQH2) to 2-polyprenyl-3-methyl-6-methoxy-1,4-benzoquinol (DMQH2). In Shewanella halifaxensis (strain HAW-EB4), this protein is Ubiquinone/menaquinone biosynthesis C-methyltransferase UbiE.